A 398-amino-acid polypeptide reads, in one-letter code: Phosphoglycerate kinase (398 aa).

Substrate is bound by residues 23-25 (DFN), arginine 38, 61-64 (HMGK), arginine 122, and arginine 155. ATP is bound by residues lysine 206, glycine 297, glutamate 328, and 354–357 (GGDS).

It belongs to the phosphoglycerate kinase family. As to quaternary structure, monomer.

Its subcellular location is the cytoplasm. It carries out the reaction (2R)-3-phosphoglycerate + ATP = (2R)-3-phospho-glyceroyl phosphate + ADP. The protein operates within carbohydrate degradation; glycolysis; pyruvate from D-glyceraldehyde 3-phosphate: step 2/5. The sequence is that of Phosphoglycerate kinase from Clostridium botulinum (strain Kyoto / Type A2).